The primary structure comprises 303 residues: Proteasome subunit beta (303 aa).

A propeptide spans 1 to 67 (MTWQFPDRLS…SGGTGQLPHG (67 aa)) (removed in mature form; by autocatalysis). T68 acts as the Nucleophile in catalysis.

It belongs to the peptidase T1B family. As to quaternary structure, the 20S proteasome core is composed of 14 alpha and 14 beta subunits that assemble into four stacked heptameric rings, resulting in a barrel-shaped structure. The two inner rings, each composed of seven catalytic beta subunits, are sandwiched by two outer rings, each composed of seven alpha subunits. The catalytic chamber with the active sites is on the inside of the barrel. Has a gated structure, the ends of the cylinder being occluded by the N-termini of the alpha-subunits. Is capped by the proteasome-associated ATPase, ARC.

The protein localises to the cytoplasm. The enzyme catalyses Cleavage of peptide bonds with very broad specificity.. It functions in the pathway protein degradation; proteasomal Pup-dependent pathway. Its activity is regulated as follows. The formation of the proteasomal ATPase ARC-20S proteasome complex, likely via the docking of the C-termini of ARC into the intersubunit pockets in the alpha-rings, may trigger opening of the gate for substrate entry. Interconversion between the open-gate and close-gate conformations leads to a dynamic regulation of the 20S proteasome proteolysis activity. In terms of biological role, component of the proteasome core, a large protease complex with broad specificity involved in protein degradation. In Mycobacterium avium (strain 104), this protein is Proteasome subunit beta.